The chain runs to 278 residues: Large ribosomal subunit protein uL2 (278 aa).

Disordered regions lie at residues 27–58 and 224–278; these read STPEKSLVRPLHGKGGRNAHGRITTRHKGGGH and VVMN…GKKR. The segment covering 37–58 has biased composition (basic residues); it reads LHGKGGRNAHGRITTRHKGGGH. Basic and acidic residues predominate over residues 253–268; that stretch reads PEGRTRKPNKPSDKLI. The span at 269-278 shows a compositional bias: basic residues; that stretch reads VRRRRTGKKR.

This sequence belongs to the universal ribosomal protein uL2 family. As to quaternary structure, part of the 50S ribosomal subunit. Forms a bridge to the 30S subunit in the 70S ribosome.

One of the primary rRNA binding proteins. Required for association of the 30S and 50S subunits to form the 70S ribosome, for tRNA binding and peptide bond formation. It has been suggested to have peptidyltransferase activity; this is somewhat controversial. Makes several contacts with the 16S rRNA in the 70S ribosome. The chain is Large ribosomal subunit protein uL2 from Mycobacterium sp. (strain KMS).